Consider the following 49-residue polypeptide: Large ribosomal subunit protein bL32c (49 aa).

A disordered region spans residues 1–23 (MTPKKRKSKSKKNLRKTNWKKKA).

Belongs to the bacterial ribosomal protein bL32 family.

The protein localises to the plastid. Its subcellular location is the chloroplast. The protein is Large ribosomal subunit protein bL32c of Oltmannsiellopsis viridis (Marine flagellate).